A 352-amino-acid chain; its full sequence is Biotin synthase (352 aa).

Residues 44 to 262 (NRVQVSTLLS…LAVARIMMPK (219 aa)) form the Radical SAM core domain. Positions 59, 63, and 66 each coordinate [4Fe-4S] cluster. 4 residues coordinate [2Fe-2S] cluster: Cys103, Cys134, Cys194, and Arg266.

This sequence belongs to the radical SAM superfamily. Biotin synthase family. As to quaternary structure, homodimer. The cofactor is [4Fe-4S] cluster. [2Fe-2S] cluster serves as cofactor.

The catalysed reaction is (4R,5S)-dethiobiotin + (sulfur carrier)-SH + 2 reduced [2Fe-2S]-[ferredoxin] + 2 S-adenosyl-L-methionine = (sulfur carrier)-H + biotin + 2 5'-deoxyadenosine + 2 L-methionine + 2 oxidized [2Fe-2S]-[ferredoxin]. Its pathway is cofactor biosynthesis; biotin biosynthesis; biotin from 7,8-diaminononanoate: step 2/2. Functionally, catalyzes the conversion of dethiobiotin (DTB) to biotin by the insertion of a sulfur atom into dethiobiotin via a radical-based mechanism. The protein is Biotin synthase of Pseudomonas aeruginosa (strain LESB58).